Here is a 549-residue protein sequence, read N- to C-terminus: MTVTSIRRAYQVIKTALHYGLDELIPSKVKPWYFRLLRCTFFWLRNQHKDKVGGERLKLVMQELGPVYIKFGQMLSTRRDLLDDEWAEELAMLQDRVPPFDSSIAREMIELELGTSIDTYFDDFDNTPLASASISQVHTATLKSNGKAVVLKVLRPNVEAQVDADLHLMSQAANFLETVLGHGNRLRPAEVVEDYRTTIEGELNLKLEALNAVKLRNNFLDSGSLYIPYMYEELCFTRLIVMERIEGIPVSDMAALKAQGTNLKVLAERGVELFFTQVFRDNFFHADMHPGNIFVSREHPEDPYYIGLDCGIMGTLTEEDKRYLAENFLAFFNRDYHRIAQLYIESGWVSPDTDIAAFEQAVKVVCEPMFNKPLDEISFGHVLLELFRTARRFDMVVQPQLVLLEKTLLYIEGLGRQLYPQLDLWQTAKPFLEKWMSEQVGPKGMASKIKKEFPYWADKLPELPELVYDNLKMGRNFVKSQNQMLDRYLKQQQKAHKSNYLLITSAVLVICGTILFNQNATLWASYGSITVGVVLWLLGWRSRPKKRKF.

The Protein kinase domain occupies 123-501; it reads DFDNTPLASA…QQKAHKSNYL (379 aa). ATP-binding positions include 129–137 and lysine 152; that span reads LASASISQV. Aspartate 287 acts as the Proton acceptor in catalysis. 2 helical membrane passes run 498–518 and 520–540; these read SNYL…LFNQ and ATLW…LLGW.

It belongs to the ABC1 family. UbiB subfamily.

The protein resides in the cell inner membrane. Its pathway is cofactor biosynthesis; ubiquinone biosynthesis [regulation]. Is probably a protein kinase regulator of UbiI activity which is involved in aerobic coenzyme Q (ubiquinone) biosynthesis. This is Probable protein kinase UbiB from Shewanella woodyi (strain ATCC 51908 / MS32).